The sequence spans 357 residues: Peptide chain release factor 1 (357 aa).

Glutamine 234 carries the N5-methylglutamine modification. The segment at arginine 284–glutamate 304 is disordered.

The protein belongs to the prokaryotic/mitochondrial release factor family. In terms of processing, methylated by PrmC. Methylation increases the termination efficiency of RF1.

The protein resides in the cytoplasm. Its function is as follows. Peptide chain release factor 1 directs the termination of translation in response to the peptide chain termination codons UAG and UAA. The chain is Peptide chain release factor 1 from Pelagibacter ubique (strain HTCC1062).